Consider the following 182-residue polypeptide: Putative manganese efflux pump MntP (182 aa).

Helical transmembrane passes span 6–26 (LIPL…VSLG), 37–57 (ILYI…IGMV), 71–91 (HFAG…SSIL), 101–121 (IGIS…SVGL), 131–151 (IITI…GLLI), and 162–182 (YGEI…LFPI).

This sequence belongs to the MntP (TC 9.B.29) family.

It is found in the cell membrane. In terms of biological role, probably functions as a manganese efflux pump. This Bacillus anthracis (strain A0248) protein is Putative manganese efflux pump MntP.